We begin with the raw amino-acid sequence, 265 residues long: Auxin-responsive protein IAA22 (265 aa).

Disordered regions lie at residues 54–88 and 172–199; these read LSTP…ERRP and DGRE…SPAM. The segment covering 65–88 has biased composition (basic and acidic residues); it reads LMNKMKPCSDEGHGSRDAAQERRP. The PB1 domain occupies 91-194; it reads TMFVKVNLEG…GVDQVSERPD (104 aa).

The protein belongs to the Aux/IAA family. In terms of assembly, homodimers and heterodimers. As to expression, highly expressed in flowers. Expressed in roots and seedlings.

It is found in the nucleus. In terms of biological role, aux/IAA proteins are short-lived transcriptional factors that function as repressors of early auxin response genes at low auxin concentrations. This Oryza sativa subsp. japonica (Rice) protein is Auxin-responsive protein IAA22 (IAA22).